The following is a 618-amino-acid chain: Protease 4 (618 aa).

The Cytoplasmic segment spans residues 1–24 (MRTLWRFIAGFFKWTWRLLNFVRE). Residues 25–45 (MVLNLFFIFLVLVGVGIWMQV) traverse the membrane as a helical segment. At 46–618 (SGGDSKETAS…AFCLTCANMR (573 aa)) the chain is on the periplasmic side. Lys209 acts as the Proton donor/acceptor in catalysis. Residue Ser409 is the Nucleophile of the active site.

The protein belongs to the peptidase S49 family. Homotetramer.

It localises to the cell inner membrane. Inhibited by serine hydrolase inhibitor FP-biotin and by antipain. In terms of biological role, digests cleaved signal peptides in vitro, its in vivo function is unknown. This activity is necessary to maintain proper secretion of mature proteins across the membrane. The chain is Protease 4 (sppA) from Escherichia coli (strain K12).